We begin with the raw amino-acid sequence, 553 residues long: uncharacterized protein (553 aa).

The signal sequence occupies residues 1–28 (MRYARHASRYSLFTLAVSAALLPGAGWA).

This is an uncharacterized protein from Pseudomonas aeruginosa (strain ATCC 15692 / DSM 22644 / CIP 104116 / JCM 14847 / LMG 12228 / 1C / PRS 101 / PAO1).